The following is a 163-amino-acid chain: UPF0134 protein MPN_139 (163 aa).

This sequence belongs to the UPF0134 family.

The chain is UPF0134 protein MPN_139 from Mycoplasma pneumoniae (strain ATCC 29342 / M129 / Subtype 1) (Mycoplasmoides pneumoniae).